A 523-amino-acid polypeptide reads, in one-letter code: DNA-(apurinic or apyrimidinic site) endonuclease 2 (523 aa).

Mg(2+) is bound at residue Glu-42. Residue Tyr-151 is part of the active site. Asp-191, Asn-193, and Asp-294 together coordinate Mg(2+). The active-site Proton donor/acceptor is Asp-191. The interval 348-392 is disordered; it reads MKKNKNNSPTQSENVSASASSGSSPTVSRANSVIDVDAYPPEKRR. A compositionally biased stretch (polar residues) spans 353–362; it reads NNSPTQSENV. Residues Cys-458, His-461, Cys-484, and Cys-508 each coordinate Zn(2+). The segment at 458–517 adopts a GRF-type zinc-finger fold; that stretch reads CEGHKEPCKYLTVRKPGINYGRKFWICARPVGELIKNSNAVSEEDTQPFQCRFFIWDSDW.

Belongs to the DNA repair enzymes AP/ExoA family. It depends on Mg(2+) as a cofactor. Mn(2+) serves as cofactor.

Its subcellular location is the nucleus. The enzyme catalyses Exonucleolytic cleavage in the 3'- to 5'-direction to yield nucleoside 5'-phosphates.. In terms of biological role, DNA repair enzyme that cleaves apurinic/apyrimidinic (AP) sites and removes 3'-blocking groups present at single strand breaks of damaged DNA. Provides the majority of the AP-endonuclease (APE) activity. Repairs phleomycin D1-induced DNA damage. Plays a role in oxidative damage repair. The sequence is that of DNA-(apurinic or apyrimidinic site) endonuclease 2 (apn2) from Schizosaccharomyces pombe (strain 972 / ATCC 24843) (Fission yeast).